Here is a 189-residue protein sequence, read N- to C-terminus: UPF0301 protein RMA_0049 (189 aa).

This sequence belongs to the UPF0301 (AlgH) family.

This is UPF0301 protein RMA_0049 from Rickettsia massiliae (strain Mtu5).